Consider the following 357-residue polypeptide: Fructose-1,6-bisphosphatase class 1 2 (357 aa).

The Mg(2+) site is built by Glu-90, Asp-112, Leu-114, and Asp-115. Substrate contacts are provided by residues 115–118 and Asn-206; that span reads DGSS. Glu-278 contacts Mg(2+).

The protein belongs to the FBPase class 1 family. As to quaternary structure, homotetramer. It depends on Mg(2+) as a cofactor.

Its subcellular location is the cytoplasm. It carries out the reaction beta-D-fructose 1,6-bisphosphate + H2O = beta-D-fructose 6-phosphate + phosphate. The protein operates within carbohydrate biosynthesis; gluconeogenesis. This chain is Fructose-1,6-bisphosphatase class 1 2, found in Dechloromonas aromatica (strain RCB).